A 374-amino-acid chain; its full sequence is Alanine racemase (374 aa).

Lys35 acts as the Proton acceptor; specific for D-alanine in catalysis. Lys35 bears the N6-(pyridoxal phosphate)lysine mark. A substrate-binding site is contributed by Arg130. Catalysis depends on Tyr261, which acts as the Proton acceptor; specific for L-alanine. Met309 serves as a coordination point for substrate.

It belongs to the alanine racemase family. The cofactor is pyridoxal 5'-phosphate.

It catalyses the reaction L-alanine = D-alanine. The protein operates within amino-acid biosynthesis; D-alanine biosynthesis; D-alanine from L-alanine: step 1/1. Functionally, catalyzes the interconversion of L-alanine and D-alanine. May also act on other amino acids. The chain is Alanine racemase (alr) from Albidiferax ferrireducens (strain ATCC BAA-621 / DSM 15236 / T118) (Rhodoferax ferrireducens).